The sequence spans 263 residues: Shikimate dehydrogenase (NADP(+)) (263 aa).

Shikimate is bound by residues 16–18 (SKS) and Thr-65. Lys-69 functions as the Proton acceptor in the catalytic mechanism. Residues Asn-90 and Asp-105 each coordinate shikimate. NADP(+)-binding positions include 125 to 129 (GSGGS) and Leu-208. Residue Tyr-210 participates in shikimate binding. Gly-230 provides a ligand contact to NADP(+).

This sequence belongs to the shikimate dehydrogenase family. As to quaternary structure, homodimer.

The enzyme catalyses shikimate + NADP(+) = 3-dehydroshikimate + NADPH + H(+). It functions in the pathway metabolic intermediate biosynthesis; chorismate biosynthesis; chorismate from D-erythrose 4-phosphate and phosphoenolpyruvate: step 4/7. Involved in the biosynthesis of the chorismate, which leads to the biosynthesis of aromatic amino acids. Catalyzes the reversible NADPH linked reduction of 3-dehydroshikimate (DHSA) to yield shikimate (SA). This is Shikimate dehydrogenase (NADP(+)) from Helicobacter pylori (strain G27).